The chain runs to 270 residues: Fibroblast growth factor 5 (270 aa).

Positions 1-20 (MSLSFLLLLFLSHLILSAWA) are cleaved as a signal peptide. The disordered stretch occupies residues 26–83 (LAPKGQPGPAATGRNPAGASSSRSSRGTTSSSSSSVSSSHSASLGNQGSGLEQSSFQW). Residues 43-68 (GASSSRSSRGTTSSSSSSVSSSHSAS) are compositionally biased toward low complexity. The segment covering 69-83 (LGNQGSGLEQSSFQW) has biased composition (polar residues). An N-linked (GlcNAc...) asparagine glycan is attached at asparagine 112. A disordered region spans residues 236 to 257 (PEKKKPPSPVKPKVPLSAPRKS).

This sequence belongs to the heparin-binding growth factors family. Interacts with FGFR1 and FGFR2. Affinity between fibroblast growth factors (FGFs) and their receptors is increased by heparan sulfate glycosaminoglycans that function as coreceptors. As to expression, expressed in skin.

It localises to the secreted. In terms of biological role, plays an important role in the regulation of cell proliferation and cell differentiation. Required for normal regulation of the hair growth cycle. Functions as an inhibitor of hair elongation by promoting progression from anagen, the growth phase of the hair follicle, into catagen the apoptosis-induced regression phase. The chain is Fibroblast growth factor 5 (FGF5) from Felis catus (Cat).